The chain runs to 653 residues: Large subunit GTPase 1 homolog (653 aa).

The tract at residues 1 to 31 is disordered; it reads MGRRRAPAGGSLGRALMRHQTQRSRSHRHTD. The span at 16 to 28 shows a compositional bias: basic residues; it reads LMRHQTQRSRSHR. Phosphoserine occurs at positions 93 and 97. A CP-type G domain is found at 164–445; that stretch reads WRQLWRVIER…LCDCPGLVMP (282 aa). 212 to 215 is a binding site for GTP; that stretch reads NKAD. Positions 251-358 are disordered; sequence DSEEEANKDD…RKTPQKRQLH (108 aa). Serine 252 carries the phosphoserine modification. Residues 258 to 288 are compositionally biased toward basic and acidic residues; that stretch reads KDDRQSNTAEFEHSSFDEAEISHSETEHLPA. Positions 299 to 333 are enriched in acidic residues; that stretch reads TTDEDDSEYEDCPEEEEDDWQTCSEEDGPEEEDCG. Residues 394–401 and 438–441 each bind GTP; these read GYPNVGKS and DCPG. A disordered region spans residues 630–653; sequence SENGAGKPWKKHGNRNKKEKSCRL. A compositionally biased stretch (basic residues) spans 637 to 647; sequence PWKKHGNRNKK.

The protein belongs to the TRAFAC class YlqF/YawG GTPase family. LSG1 subfamily.

It localises to the cytoplasm. Its subcellular location is the endoplasmic reticulum. The protein localises to the nucleus. The protein resides in the cajal body. The enzyme catalyses GTP + H2O = GDP + phosphate + H(+). In terms of biological role, functions as a GTPase. May act by mediating the release of NMD3 from the 60S ribosomal subunit after export into the cytoplasm during the 60S ribosomal subunit maturation. This chain is Large subunit GTPase 1 homolog, found in Macaca fascicularis (Crab-eating macaque).